The following is a 309-amino-acid chain: Protein FdhE homolog (309 aa).

This sequence belongs to the FdhE family.

Its subcellular location is the cytoplasm. Functionally, necessary for formate dehydrogenase activity. This chain is Protein FdhE homolog, found in Pectobacterium atrosepticum (strain SCRI 1043 / ATCC BAA-672) (Erwinia carotovora subsp. atroseptica).